A 267-amino-acid chain; its full sequence is Tryptophan synthase alpha chain (267 aa).

Residues Glu49 and Asp60 each act as proton acceptor in the active site.

The protein belongs to the TrpA family. In terms of assembly, tetramer of two alpha and two beta chains.

The enzyme catalyses (1S,2R)-1-C-(indol-3-yl)glycerol 3-phosphate + L-serine = D-glyceraldehyde 3-phosphate + L-tryptophan + H2O. Its pathway is amino-acid biosynthesis; L-tryptophan biosynthesis; L-tryptophan from chorismate: step 5/5. Its function is as follows. The alpha subunit is responsible for the aldol cleavage of indoleglycerol phosphate to indole and glyceraldehyde 3-phosphate. The chain is Tryptophan synthase alpha chain from Carboxydothermus hydrogenoformans (strain ATCC BAA-161 / DSM 6008 / Z-2901).